A 95-amino-acid chain; its full sequence is Acylphosphatase (95 aa).

The Acylphosphatase-like domain occupies 8–95 (RAKILVRGKV…GNFRTFEIKK (88 aa)). Catalysis depends on residues arginine 23 and asparagine 41.

Belongs to the acylphosphatase family.

The enzyme catalyses an acyl phosphate + H2O = a carboxylate + phosphate + H(+). This Leptospira interrogans serogroup Icterohaemorrhagiae serovar copenhageni (strain Fiocruz L1-130) protein is Acylphosphatase (acyP).